Here is a 361-residue protein sequence, read N- to C-terminus: 3-dehydroquinate synthase (361 aa).

NAD(+)-binding positions include D70–K75, G104–D108, T128–T129, K141, and K150. Zn(2+)-binding residues include E183, H246, and H263.

It belongs to the sugar phosphate cyclases superfamily. Dehydroquinate synthase family. Requires Co(2+) as cofactor. Zn(2+) is required as a cofactor. The cofactor is NAD(+).

The protein localises to the cytoplasm. It carries out the reaction 7-phospho-2-dehydro-3-deoxy-D-arabino-heptonate = 3-dehydroquinate + phosphate. It functions in the pathway metabolic intermediate biosynthesis; chorismate biosynthesis; chorismate from D-erythrose 4-phosphate and phosphoenolpyruvate: step 2/7. Functionally, catalyzes the conversion of 3-deoxy-D-arabino-heptulosonate 7-phosphate (DAHP) to dehydroquinate (DHQ). The protein is 3-dehydroquinate synthase of Teredinibacter turnerae (strain ATCC 39867 / T7901).